Reading from the N-terminus, the 283-residue chain is NADPH-dependent 3-dehydrocapnine reductase (283 aa).

Tyr-153 (proton acceptor) is an active-site residue.

This sequence belongs to the short-chain dehydrogenases/reductases (SDR) family.

It catalyses the reaction 3-oxocapnine + NADPH + H(+) = capnine + NADP(+). It functions in the pathway lipid metabolism. In terms of biological role, reductase involved in the biosynthesis of capnine, a sulfonolipid present in the outer membrane of gliding Bacteroidetes and essential for gliding motility. Catalyzes the reduction of 3-dehydrocapnine to capnine. The chain is NADPH-dependent 3-dehydrocapnine reductase from Ornithobacterium rhinotracheale.